The primary structure comprises 176 residues: Lactoylglutathione lyase (176 aa).

In terms of domain architecture, VOC spans 23–167 (VFNHTMLRVK…DGYWVEIVQA (145 aa)). Histidine 26 contacts Ni(2+). A substrate-binding site is contributed by arginine 30. A Ni(2+)-binding site is contributed by glutamate 92. Substrate is bound by residues asparagine 96, arginine 114, and histidine 118. Positions 118 and 163 each coordinate Ni(2+). The active-site Proton donor/acceptor is the glutamate 163.

This sequence belongs to the glyoxalase I family. Monomer. Requires Ni(2+) as cofactor. The cofactor is Zn(2+).

It catalyses the reaction (R)-S-lactoylglutathione = methylglyoxal + glutathione. The protein operates within secondary metabolite metabolism; methylglyoxal degradation; (R)-lactate from methylglyoxal: step 1/2. In terms of biological role, catalyzes the conversion of hemimercaptal, formed from methylglyoxal and glutathione, to S-lactoylglutathione. The polypeptide is Lactoylglutathione lyase (gloA) (Pseudomonas aeruginosa (strain ATCC 15692 / DSM 22644 / CIP 104116 / JCM 14847 / LMG 12228 / 1C / PRS 101 / PAO1)).